The primary structure comprises 409 residues: Argininosuccinate synthase (409 aa).

ATP-binding positions include 10-18 and Ala-37; that span reads AYSGGLDTS. Residues Tyr-90 and Ser-95 each contribute to the L-citrulline site. Gly-120 provides a ligand contact to ATP. Thr-122, Asn-126, and Asp-127 together coordinate L-aspartate. Asn-126 provides a ligand contact to L-citrulline. Arg-130, Ser-182, Ser-191, Glu-267, and Tyr-279 together coordinate L-citrulline.

Belongs to the argininosuccinate synthase family. Type 1 subfamily. In terms of assembly, homotetramer.

It localises to the cytoplasm. The catalysed reaction is L-citrulline + L-aspartate + ATP = 2-(N(omega)-L-arginino)succinate + AMP + diphosphate + H(+). Its pathway is amino-acid biosynthesis; L-arginine biosynthesis; L-arginine from L-ornithine and carbamoyl phosphate: step 2/3. This chain is Argininosuccinate synthase, found in Aromatoleum aromaticum (strain DSM 19018 / LMG 30748 / EbN1) (Azoarcus sp. (strain EbN1)).